The primary structure comprises 232 residues: Probable anion ABC transporter permease protein HVO_1887 (232 aa).

Residues 16–217 form the ABC transmembrane type-1 domain; it reads TAVSLYVSTA…ALVLGVNALG (202 aa). The next 5 membrane-spanning stretches (helical) occupy residues 23-43, 55-75, 93-113, 146-166, and 198-218; these read STAA…AVGF, VIST…LLVL, MILS…LSAV, IVTA…SVLI, and TGIA…ALGA.

Belongs to the binding-protein-dependent transport system permease family. In terms of assembly, the complex is composed of two ATP-binding proteins (HVO_1886), two transmembrane proteins (HVO_1887) and a solute-binding protein (HVO_1888).

It localises to the cell membrane. Functionally, part of an ABC transporter complex involved in anions import. Responsible for the translocation of the substrate across the membrane. In Haloferax volcanii (strain ATCC 29605 / DSM 3757 / JCM 8879 / NBRC 14742 / NCIMB 2012 / VKM B-1768 / DS2) (Halobacterium volcanii), this protein is Probable anion ABC transporter permease protein HVO_1887.